Here is a 141-residue protein sequence, read N- to C-terminus: Hemoglobin subunit alpha-D (141 aa).

In terms of domain architecture, Globin spans 1 to 141; sequence MLTAEDKKLI…VSAVLAEKYR (141 aa). The heme b site is built by His-58 and His-87.

This sequence belongs to the globin family. As to quaternary structure, heterotetramer of two alpha-D chains and two beta chains. Red blood cells.

Its function is as follows. Involved in oxygen transport from the lung to the various peripheral tissues. The sequence is that of Hemoglobin subunit alpha-D (HBAD) from Meleagris gallopavo (Wild turkey).